The following is a 253-amino-acid chain: uncharacterized protein (253 aa).

This is an uncharacterized protein from Acanthamoeba polyphaga mimivirus (APMV).